An 880-amino-acid polypeptide reads, in one-letter code: Alanine--tRNA ligase (880 aa).

Zn(2+) contacts are provided by His-565, His-569, Cys-675, and His-679.

It belongs to the class-II aminoacyl-tRNA synthetase family. It depends on Zn(2+) as a cofactor.

Its subcellular location is the cytoplasm. The catalysed reaction is tRNA(Ala) + L-alanine + ATP = L-alanyl-tRNA(Ala) + AMP + diphosphate. Its function is as follows. Catalyzes the attachment of alanine to tRNA(Ala) in a two-step reaction: alanine is first activated by ATP to form Ala-AMP and then transferred to the acceptor end of tRNA(Ala). Also edits incorrectly charged Ser-tRNA(Ala) and Gly-tRNA(Ala) via its editing domain. This Granulibacter bethesdensis (strain ATCC BAA-1260 / CGDNIH1) protein is Alanine--tRNA ligase.